The sequence spans 175 residues: MNGIPTPTVDIQWASDAPDAPDETHLCEWVRHAAIAAGGVVGDITLRIVDEEEIRTLNRDYRDKDAPTNVLSFPFEMPEGLPEGAMDPLVGDIIICAAVVRREANEQHKPLVAHWAHMVTHGVLHLLGYDHIDDDDAIVMETLEIRALGELGFPDPYSPAQQESQAQPENTELNP.

The Zn(2+) site is built by His121, His125, and His131. Residues 154–175 (PDPYSPAQQESQAQPENTELNP) form a disordered region. Residues 159–175 (PAQQESQAQPENTELNP) are compositionally biased toward polar residues.

The protein belongs to the endoribonuclease YbeY family. The cofactor is Zn(2+).

The protein resides in the cytoplasm. Its function is as follows. Single strand-specific metallo-endoribonuclease involved in late-stage 70S ribosome quality control and in maturation of the 3' terminus of the 16S rRNA. This is Endoribonuclease YbeY from Alcanivorax borkumensis (strain ATCC 700651 / DSM 11573 / NCIMB 13689 / SK2).